We begin with the raw amino-acid sequence, 237 residues long: Bax inhibitor 1 (237 aa).

Residues 1–29 (MNIFDRKINFDALLKFSHITPSTQQHLKK) lie on the Cytoplasmic side of the membrane. Residue K7 forms a Glycyl lysine isopeptide (Lys-Gly) (interchain with G-Cter in ubiquitin) linkage. Residues 30–50 (VYASFALCMFVAAAGAYVHVV) form a helical membrane-spanning segment. The Lumenal segment spans residues 51–52 (TR). The chain crosses the membrane as a helical span at residues 53–73 (FIQAGLLSALGALALMICLMA). At 74–86 (TPHSHETEQKRLG) the chain is on the cytoplasmic side. Residues 87-107 (LLAGFAFLTGVGLGPALELCI) traverse the membrane as a helical segment. At 108–112 (AINPS) the chain is on the lumenal side. Residues 113–133 (ILPTAFMGTAMIFTCFSLSAL) form a helical membrane-spanning segment. Over 134–139 (YARRRS) the chain is Cytoplasmic. The helical transmembrane segment at 140–160 (YLFLGGILMSAMSLMFVSSLG) threads the bilayer. Residues 161-166 (NLFFGS) lie on the Lumenal side of the membrane. A helical transmembrane segment spans residues 167–187 (IWLFQANLYMGLLVMCGFVLF). The Cytoplasmic portion of the chain corresponds to 188–206 (DTQLIIEKAEHGDKDYIWH). An intramembrane region (helical) is located at residues 207-227 (CIDLFLDFVTLFRKLMLILAF). Topologically, residues 228–237 (NEKDKKKEKK) are cytoplasmic.

The protein belongs to the BI1 family. As to quaternary structure, interacts with BCL2 and BCL2L1. Interacts with ERN1. Post-translationally, ubiquitinated by BFAR, leading to proteasomal degradation. As to expression, highly abundant in adult testis.

The protein localises to the endoplasmic reticulum membrane. Functionally, endoplasmic reticulum (ER)-resident protein that confers cellular protection as an anti-apoptotic protein by limiting multiple stress-inducing pathways surrounding the endoplasmic reticulum and mitochondria. Inhibits the activities of the key sensor for the endoplasmic reticulum unfolded protein response IRE1alpha/ERN1 both directly and by blocking BAX/BAK binding. Modulates ER calcium homeostasis by acting as a calcium-leak channel. Negatively regulates autophagy and autophagosome formation, especially during periods of nutrient deprivation, and reduces cell survival during starvation. This is Bax inhibitor 1 (Tmbim6) from Rattus norvegicus (Rat).